The following is a 207-amino-acid chain: Small ribosomal subunit protein uS4c (207 aa).

The S4 RNA-binding domain maps to 92 to 155 (MRLDNILFRL…TYQSILSKRI (64 aa)).

The protein belongs to the universal ribosomal protein uS4 family. In terms of assembly, part of the 30S ribosomal subunit. Contacts protein S5. The interaction surface between S4 and S5 is involved in control of translational fidelity.

The protein localises to the plastid. It is found in the chloroplast. One of the primary rRNA binding proteins, it binds directly to 16S rRNA where it nucleates assembly of the body of the 30S subunit. In terms of biological role, with S5 and S12 plays an important role in translational accuracy. This chain is Small ribosomal subunit protein uS4c (rps4), found in Equisetum giganteum (Giant horsetail).